The primary structure comprises 375 residues: Erythronate-4-phosphate dehydrogenase (375 aa).

Positions 45 and 66 each coordinate substrate. NAD(+) contacts are provided by aspartate 146 and threonine 175. The active site involves arginine 208. Aspartate 232 contributes to the NAD(+) binding site. Residue glutamate 237 is part of the active site. Histidine 254 acts as the Proton donor in catalysis. Glycine 257 contacts NAD(+). Residue tyrosine 258 participates in substrate binding.

This sequence belongs to the D-isomer specific 2-hydroxyacid dehydrogenase family. PdxB subfamily. As to quaternary structure, homodimer.

Its subcellular location is the cytoplasm. The catalysed reaction is 4-phospho-D-erythronate + NAD(+) = (R)-3-hydroxy-2-oxo-4-phosphooxybutanoate + NADH + H(+). Its pathway is cofactor biosynthesis; pyridoxine 5'-phosphate biosynthesis; pyridoxine 5'-phosphate from D-erythrose 4-phosphate: step 2/5. Catalyzes the oxidation of erythronate-4-phosphate to 3-hydroxy-2-oxo-4-phosphonooxybutanoate. The polypeptide is Erythronate-4-phosphate dehydrogenase (Yersinia enterocolitica serotype O:8 / biotype 1B (strain NCTC 13174 / 8081)).